An 86-amino-acid polypeptide reads, in one-letter code: Large ribosomal subunit protein bL27 (86 aa).

The interval 1-24 (MATKKAGGSSRNGRDSAGRRLGVK) is disordered.

This sequence belongs to the bacterial ribosomal protein bL27 family.

This chain is Large ribosomal subunit protein bL27, found in Rickettsia conorii (strain ATCC VR-613 / Malish 7).